A 103-amino-acid polypeptide reads, in one-letter code: Small ribosomal subunit protein uS10c (103 aa).

The protein belongs to the universal ribosomal protein uS10 family. In terms of assembly, part of the 30S ribosomal subunit.

The protein localises to the plastid. The protein resides in the chloroplast. Its function is as follows. Involved in the binding of tRNA to the ribosomes. This is Small ribosomal subunit protein uS10c from Emiliania huxleyi (Coccolithophore).